The sequence spans 197 residues: 3-isopropylmalate dehydratase small subunit (197 aa).

This sequence belongs to the LeuD family. LeuD type 1 subfamily. In terms of assembly, heterodimer of LeuC and LeuD.

It catalyses the reaction (2R,3S)-3-isopropylmalate = (2S)-2-isopropylmalate. Its pathway is amino-acid biosynthesis; L-leucine biosynthesis; L-leucine from 3-methyl-2-oxobutanoate: step 2/4. Catalyzes the isomerization between 2-isopropylmalate and 3-isopropylmalate, via the formation of 2-isopropylmaleate. In Streptomyces avermitilis (strain ATCC 31267 / DSM 46492 / JCM 5070 / NBRC 14893 / NCIMB 12804 / NRRL 8165 / MA-4680), this protein is 3-isopropylmalate dehydratase small subunit.